The sequence spans 123 residues: Large ribosomal subunit protein uL18 (123 aa).

The protein belongs to the universal ribosomal protein uL18 family. As to quaternary structure, part of the 50S ribosomal subunit; part of the 5S rRNA/L5/L18/L25 subcomplex. Contacts the 5S and 23S rRNAs.

Functionally, this is one of the proteins that bind and probably mediate the attachment of the 5S RNA into the large ribosomal subunit, where it forms part of the central protuberance. The protein is Large ribosomal subunit protein uL18 of Protochlamydia amoebophila (strain UWE25).